A 483-amino-acid polypeptide reads, in one-letter code: UDP-N-acetylmuramoyl-L-alanyl-D-glutamate--2,6-diaminopimelate ligase 2 (483 aa).

Serine 30 serves as a coordination point for UDP-N-acetyl-alpha-D-muramoyl-L-alanyl-D-glutamate. 111–117 (GTNGKTT) contacts ATP. UDP-N-acetyl-alpha-D-muramoyl-L-alanyl-D-glutamate-binding positions include 156-157 (TT), threonine 183, and arginine 191. Lysine 223 is subject to N6-carboxylysine. Meso-2,6-diaminopimelate-binding positions include arginine 380, 404 to 407 (DNPR), glycine 456, and glutamate 460. The short motif at 404-407 (DNPR) is the Meso-diaminopimelate recognition motif element.

This sequence belongs to the MurCDEF family. MurE subfamily. Mg(2+) serves as cofactor. Carboxylation is probably crucial for Mg(2+) binding and, consequently, for the gamma-phosphate positioning of ATP.

The protein resides in the cytoplasm. It carries out the reaction UDP-N-acetyl-alpha-D-muramoyl-L-alanyl-D-glutamate + meso-2,6-diaminopimelate + ATP = UDP-N-acetyl-alpha-D-muramoyl-L-alanyl-gamma-D-glutamyl-meso-2,6-diaminopimelate + ADP + phosphate + H(+). It functions in the pathway cell wall biogenesis; peptidoglycan biosynthesis. Functionally, catalyzes the addition of meso-diaminopimelic acid to the nucleotide precursor UDP-N-acetylmuramoyl-L-alanyl-D-glutamate (UMAG) in the biosynthesis of bacterial cell-wall peptidoglycan. The sequence is that of UDP-N-acetylmuramoyl-L-alanyl-D-glutamate--2,6-diaminopimelate ligase 2 from Clostridium acetobutylicum (strain ATCC 824 / DSM 792 / JCM 1419 / IAM 19013 / LMG 5710 / NBRC 13948 / NRRL B-527 / VKM B-1787 / 2291 / W).